The chain runs to 607 residues: Pogo transposable element with KRAB domain (607 aa).

A coiled-coil region spans residues 8 to 29; it reads LNLTLKEEQKEEEVEIQELEDG. A Glycyl lysine isopeptide (Lys-Gly) (interchain with G-Cter in SUMO2) cross-link involves residue Lys-13. The KRAB domain maps to 47-118; the sequence is ALFDEVAIYF…DEWRLQGVTF (72 aa). Residues 250-323 form the HTH CENPB-type domain; that stretch reads AFRGPKNGRF…MRRYDLSLRH (74 aa). The DDE-1 domain occupies 355–567; the sequence is YEVAQMGNAD…ISSESIVQGF (213 aa). Residue Lys-384 forms a Glycyl lysine isopeptide (Lys-Gly) (interchain with G-Cter in SUMO2) linkage. The tract at residues 588 to 607 is disordered; the sequence is GELPKEPPKECGPESVAEGD. Positions 589–599 are enriched in basic and acidic residues; sequence ELPKEPPKECG.

It is found in the nucleus. The polypeptide is Pogo transposable element with KRAB domain (Pogk) (Mus musculus (Mouse)).